We begin with the raw amino-acid sequence, 452 residues long: Fructose-2,6-bisphosphatase (452 aa).

The interval M1–K223 is 6-phosphofructo-2-kinase. Residue G20–F28 coordinates ATP. Residues R53 and R78 each coordinate beta-D-fructose 6-phosphate. D104 is a catalytic residue. Beta-D-fructose 6-phosphate is bound by residues T106 and R112. Residue N143–G148 coordinates ATP. Residues R169 and Y173 each coordinate beta-D-fructose 6-phosphate. The interval P224–F452 is fructose-2,6-bisphosphatase. Beta-D-fructose 2,6-bisphosphate is bound at residue R231. The active-site Tele-phosphohistidine intermediate is H232. Residues N238 and G244 each coordinate beta-D-fructose 2,6-bisphosphate. E302 serves as the catalytic Proton donor/acceptor. Positions 313, 327, 331, 342, 368, and 372 each coordinate beta-D-fructose 2,6-bisphosphate. F324 to R327 contacts ATP. ATP is bound by residues Q368–R372 and Y404. S435 and S446 each carry phosphoserine.

The protein in the C-terminal section; belongs to the phosphoglycerate mutase family.

It carries out the reaction beta-D-fructose 2,6-bisphosphate + H2O = beta-D-fructose 6-phosphate + phosphate. With respect to regulation, inhibited by fructose 6-P, activated by glycerol 3-P. Its function is as follows. Monofunctional, high-specificity fructose-2,6-bisphosphatase, which releases phosphate from the 2-position of fructose 2,6-bisphosphate. Has no detectable 6-phosphofructo-2-kinase activity. The protein is Fructose-2,6-bisphosphatase of Saccharomyces cerevisiae (strain ATCC 204508 / S288c) (Baker's yeast).